Consider the following 256-residue polypeptide: Imidazole glycerol phosphate synthase subunit HisF (256 aa).

Catalysis depends on residues aspartate 11 and aspartate 130.

Belongs to the HisA/HisF family. As to quaternary structure, heterodimer of HisH and HisF.

The protein resides in the cytoplasm. It catalyses the reaction 5-[(5-phospho-1-deoxy-D-ribulos-1-ylimino)methylamino]-1-(5-phospho-beta-D-ribosyl)imidazole-4-carboxamide + L-glutamine = D-erythro-1-(imidazol-4-yl)glycerol 3-phosphate + 5-amino-1-(5-phospho-beta-D-ribosyl)imidazole-4-carboxamide + L-glutamate + H(+). It functions in the pathway amino-acid biosynthesis; L-histidine biosynthesis; L-histidine from 5-phospho-alpha-D-ribose 1-diphosphate: step 5/9. Its function is as follows. IGPS catalyzes the conversion of PRFAR and glutamine to IGP, AICAR and glutamate. The HisF subunit catalyzes the cyclization activity that produces IGP and AICAR from PRFAR using the ammonia provided by the HisH subunit. This Thioalkalivibrio sulfidiphilus (strain HL-EbGR7) protein is Imidazole glycerol phosphate synthase subunit HisF.